Consider the following 451-residue polypeptide: Phosphoglucosamine mutase (451 aa).

Residue Ser101 is the Phosphoserine intermediate of the active site. Mg(2+) is bound by residues Ser101, Asp242, Asp244, and Asp246. Phosphoserine is present on Ser101.

This sequence belongs to the phosphohexose mutase family. It depends on Mg(2+) as a cofactor. Activated by phosphorylation.

The catalysed reaction is alpha-D-glucosamine 1-phosphate = D-glucosamine 6-phosphate. Catalyzes the conversion of glucosamine-6-phosphate to glucosamine-1-phosphate. In Beijerinckia indica subsp. indica (strain ATCC 9039 / DSM 1715 / NCIMB 8712), this protein is Phosphoglucosamine mutase.